A 140-amino-acid chain; its full sequence is Large ribosomal subunit protein uL11 (140 aa).

This sequence belongs to the universal ribosomal protein uL11 family. In terms of assembly, part of the ribosomal stalk of the 50S ribosomal subunit. Interacts with L10 and the large rRNA to form the base of the stalk. L10 forms an elongated spine to which L12 dimers bind in a sequential fashion forming a multimeric L10(L12)X complex. Post-translationally, one or more lysine residues are methylated.

Forms part of the ribosomal stalk which helps the ribosome interact with GTP-bound translation factors. The protein is Large ribosomal subunit protein uL11 of Lawsonia intracellularis (strain PHE/MN1-00).